Here is a 138-residue protein sequence, read N- to C-terminus: Large ribosomal subunit protein uL16 (138 aa).

This sequence belongs to the universal ribosomal protein uL16 family. In terms of assembly, part of the 50S ribosomal subunit.

Binds 23S rRNA and is also seen to make contacts with the A and possibly P site tRNAs. The sequence is that of Large ribosomal subunit protein uL16 from Syntrophobacter fumaroxidans (strain DSM 10017 / MPOB).